Reading from the N-terminus, the 105-residue chain is Phosphoribosyl-AMP cyclohydrolase (105 aa).

Asp-72 lines the Mg(2+) pocket. Cys-73 lines the Zn(2+) pocket. Asp-74 and Asp-76 together coordinate Mg(2+). Positions 89 and 96 each coordinate Zn(2+).

Belongs to the PRA-CH family. Homodimer. Requires Mg(2+) as cofactor. Zn(2+) is required as a cofactor.

It localises to the cytoplasm. It carries out the reaction 1-(5-phospho-beta-D-ribosyl)-5'-AMP + H2O = 1-(5-phospho-beta-D-ribosyl)-5-[(5-phospho-beta-D-ribosylamino)methylideneamino]imidazole-4-carboxamide. It functions in the pathway amino-acid biosynthesis; L-histidine biosynthesis; L-histidine from 5-phospho-alpha-D-ribose 1-diphosphate: step 3/9. Its function is as follows. Catalyzes the hydrolysis of the adenine ring of phosphoribosyl-AMP. The polypeptide is Phosphoribosyl-AMP cyclohydrolase (Listeria innocua serovar 6a (strain ATCC BAA-680 / CLIP 11262)).